Reading from the N-terminus, the 860-residue chain is Leucine--tRNA ligase (860 aa).

Positions 42 to 52 match the 'HIGH' region motif; it reads PYPSGRLHMGH. Positions 619–623 match the 'KMSKS' region motif; the sequence is KMSKS. Residue lysine 622 participates in ATP binding.

This sequence belongs to the class-I aminoacyl-tRNA synthetase family.

The protein localises to the cytoplasm. The enzyme catalyses tRNA(Leu) + L-leucine + ATP = L-leucyl-tRNA(Leu) + AMP + diphosphate. This Yersinia pseudotuberculosis serotype I (strain IP32953) protein is Leucine--tRNA ligase.